Reading from the N-terminus, the 963-residue chain is MSTTSLQPFAPSFSPFPSTQSLGMAPSQTIGLDTLAEGSQYSLEQLQLSREAGNDAATATSSTSLRSSSFSKSTDQSVSNPSGNHHSNNGPPSDFKSSQRDPLAEARSAIRKNSTSAPVRRRISRACDQCNQLRTKCDGQHPCAHCIEFGLTCEYARERKKRGKASKKDLAAAAAAAAAAGSTSSSTANDGGPMLTKGHSPSDGRSSHEINGRYDPAFDAARTLTNSAQSQLQSHADVPGMVGMQNSQQPHSQPPLGAALDALHLNHFSALNESNRPQMSVPDLRTLQMLHPSGTNPRSPSAVLPSQGLNSYNETAYSLMNPQESNPASMNHFRLGSSAENQPPSFLGLSPPAQSPGWLPLPSPSPANFPSFSMNPYPSTLRYPVLQPVLPHIASIIPQSLACDLLDVYFTSFSPSHLSPLSPYVVAYIFRKQSFLHPTKPRVCSPGLLASMLWVAAQTSDAAFLTSPPSARGRVCQKLLELTIGLLRPLIHGPAPGETSPNYAANMVINGVALGGFGVSMDQLGAQSTATGAVDDVATYVHLATVVSASEYKAASIRWWTAAWSLARELKLGRELPPNTNTARQDGDRDADSDVDMSKRNLPSLVTSVGHGSGTPLNVTEEEREERRRLWWLLYATDRHLALCYNQPLRLLDKECEGLLQPMNDDLWQAGDFGAVGYRQVGPPIECSGHSMFGYFLPLMTILGGIVDLQQAKEHPRFGIAFRNSSEWEHQVLELTRQLETYGQSLKEFESRYTSSLALGAADNETIVDGGHLDHVSPSGRSSSTVGSRINESIVHTKMVVAYGTHIMHVLHILLAGKWDPINLLEDQDLWISSESFITAMGHAVGAADAAADILEYDPDLSFMPFFFGIYLLQGSFLLLLAADKLQGDASPSVVRACETIVRAHEACVVTLNTEYQTFRKVMRSALAQVRGRMPEDFGEQQQRRREVLALYRWTGDGSGLAL.

Disordered stretches follow at residues 1-30 (MSTT…SQTI) and 46-121 (LQLS…PVRR). Residues 8 to 18 (PFAPSFSPFPS) show a composition bias toward low complexity. A compositionally biased stretch (polar residues) spans 19-30 (TQSLGMAPSQTI). Over residues 56 to 93 (AATATSSTSLRSSSFSKSTDQSVSNPSGNHHSNNGPPS) the composition is skewed to low complexity. The zn(2)-C6 fungal-type DNA-binding region spans 127–153 (CDQCNQLRTKCDGQHPCAHCIEFGLTC). Over residues 178–188 (AAAGSTSSSTA) the composition is skewed to low complexity. Disordered stretches follow at residues 178 to 213 (AAAG…INGR), 322 to 349 (PQES…FLGL), and 576 to 597 (LPPN…DVDM). Residues 200–212 (SPSDGRSSHEING) show a composition bias toward basic and acidic residues. A compositionally biased stretch (basic and acidic residues) spans 585–597 (QDGDRDADSDVDM).

Belongs to the xlnR/xlr1 family.

It localises to the nucleus. Transcriptional activator of the xylanolytic system. Involved in the regulation of extracellular cellulolytic and xylanolytic genes and in the regulation of the intracellular activities of D-xylose catabolic genes in the pentose catabolic pathway (PCP) in response to the presence of D-xylose. This is Xylanolytic transcriptional activator xlnR (xlnR) from Aspergillus terreus (strain NIH 2624 / FGSC A1156).